The chain runs to 1079 residues: Eukaryotic translation initiation factor 5B (1079 aa).

The segment at 1-478 (MGKKGKKSGY…QAAPAESNVS (478 aa)) is disordered. Residues 22 to 38 (SGQNEYLDNTSQDSPQN) are compositionally biased toward polar residues. The span at 57-67 (SKKKKGKKNKG) shows a compositional bias: basic residues. Phosphoserine is present on residues S73, S77, and S82. Over residues 105-114 (KKGKKGKKSK) the composition is skewed to basic residues. Residue S127 is modified to Phosphoserine. A compositionally biased stretch (low complexity) spans 160–169 (NNNESEAAAP). A compositionally biased stretch (basic and acidic residues) spans 173–192 (PEVRVKTKKEKEREKKEREK). Basic residues predominate over residues 193-204 (LRKKQQQAKKKG). Residues 207–233 (GEDTLASSEVSSEVDISTPAENDSSAK) are compositionally biased toward polar residues. The span at 253–293 (MLEEKRAREEEEQRIREEEARIAEEEKRLAEVEEARKEEAR) shows a compositional bias: basic and acidic residues. Low complexity-rich tracts occupy residues 321–334 (QQAL…QMLE) and 361–376 (RSGT…LESS). Position 364 is a phosphothreonine (T364). Over residues 385-408 (EPQKDSKDDSEKVEKETEVERKEE) the composition is skewed to basic and acidic residues. A compositionally biased stretch (acidic residues) spans 409-431 (NEAEAEAVFDDWEAALEEPEVAE). Over residues 436-466 (VTEKKETDIKSDAVEHSIKDKEDSKTDKVDD) the composition is skewed to basic and acidic residues. Residues 482-700 (LRSPICCILG…LISLTQTRMS (219 aa)) form the tr-type G domain. Positions 491–498 (GHVDTGKT) are G1. A GTP-binding site is contributed by 491–498 (GHVDTGKT). The tract at residues 516–520 (GITQQ) is G2. Residues 555 to 558 (DTPG) are G3. Residues 609–612 (NKVD) form a G4 region. Residues 677 to 679 (SAQ) are G5.

Belongs to the TRAFAC class translation factor GTPase superfamily. Classic translation factor GTPase family. IF-2 subfamily. A monovalent cation serves as cofactor.

It localises to the cytoplasm. The catalysed reaction is GTP + H2O = GDP + phosphate + H(+). In terms of biological role, plays a role in translation initiation. Translational GTPase that catalyzes the joining of the 40S and 60S subunits to form the 80S initiation complex with the initiator methionine-tRNA in the P-site base paired to the start codon. GTP binding and hydrolysis induces conformational changes in the enzyme that renders it active for productive interactions with the ribosome. The release of the enzyme after formation of the initiation complex is a prerequisite to form elongation-competent ribosomes. This chain is Eukaryotic translation initiation factor 5B, found in Schizosaccharomyces pombe (strain 972 / ATCC 24843) (Fission yeast).